An 804-amino-acid chain; its full sequence is Probable replication endonuclease from prophage-like region (804 aa).

Residues tyrosine 498 and tyrosine 502 each act as O-(5'-phospho-DNA)-tyrosine intermediate in the active site.

The protein belongs to the phage GPA family.

Possible endonuclease which induces a single-strand cut and initiates DNA replication. The chain is Probable replication endonuclease from prophage-like region from Escherichia coli O6:H1 (strain CFT073 / ATCC 700928 / UPEC).